We begin with the raw amino-acid sequence, 582 residues long: SHC-transforming protein 2 (582 aa).

Disordered regions lie at residues 1–24 (MTQG…APTT) and 47–70 (GPAA…AGPG). Positions 8 to 20 (RAPPAPPAPPEPE) are enriched in pro residues. The PID domain occupies 147 to 329 (LGPGVSYVVR…AGPEESAWGD (183 aa)). Positions 330–486 (EEDSLEHNYY…PTEEQLRQEP (157 aa)) are CH1. Residues Tyr338, Tyr339, and Tyr414 each carry the phosphotyrosine modification. The interval 460 to 481 (PLEDQWPSPPTRRAPVAPTEEQ) is disordered. The SH2 domain maps to 487–578 (WYHGRMSRRA…ESELHLRGVV (92 aa)).

In terms of assembly, interacts with the Trk receptors in a phosphotyrosine-dependent manner and MEGF12. Once activated, binds to GRB2. Post-translationally, phosphorylated on tyrosines by the Trk receptors. As to expression, expressed in brain. Expressed at high level in the hypothalamus and at low level in the caudate nucleus.

Functionally, signaling adapter that couples activated growth factor receptors to signaling pathway in neurons. Involved in the signal transduction pathways of neurotrophin-activated Trk receptors in cortical neurons. This chain is SHC-transforming protein 2 (SHC2), found in Homo sapiens (Human).